Consider the following 406-residue polypeptide: Vacuole membrane protein 1 (406 aa).

Alanine 2 carries the N-acetylalanine modification. Residues alanine 2 to asparagine 43 are Cytoplasmic-facing. Residues isoleucine 44 to valine 63 traverse the membrane as a helical segment. The Extracellular portion of the chain corresponds to isoleucine 64–serine 77. Residues isoleucine 78–alanine 98 form a helical membrane-spanning segment. At histidine 99–glutamine 109 the chain is on the cytoplasmic side. The chain crosses the membrane as a helical span at residues phenylalanine 110–glycine 130. The Extracellular segment spans residues leucine 131–asparagine 250. The interval glycine 173–isoleucine 316 is VTT domain. A helical membrane pass occupies residues leucine 251 to phenylalanine 271. Residues aspartate 272–leucine 273 lie on the Cytoplasmic side of the membrane. The chain crosses the membrane as a helical span at residues alanine 274–isoleucine 294. The Extracellular portion of the chain corresponds to glycine 295–leucine 306. The chain crosses the membrane as a helical span at residues phenylalanine 307–valine 327. The Cytoplasmic portion of the chain corresponds to proline 328–tryptophan 363. The chain crosses the membrane as a helical span at residues leucine 364 to isoleucine 384. At asparagine 385–lysine 406 the chain is on the extracellular side.

Belongs to the VMP1 family. As to quaternary structure, interacts with BECN1. Interacts with TJP1. Interacts with TP53INP2. Interacts with TMEM41B. Interacts with ATP2A2, PLN and SLN; competes with PLN and SLN to prevent them from forming an inhibitory complex with ATP2A2. Interacts with ATG2A.

The protein localises to the endoplasmic reticulum-Golgi intermediate compartment membrane. Its subcellular location is the cell membrane. It localises to the vacuole membrane. The protein resides in the endoplasmic reticulum membrane. It catalyses the reaction a 1,2-diacyl-sn-glycero-3-phospho-L-serine(in) = a 1,2-diacyl-sn-glycero-3-phospho-L-serine(out). It carries out the reaction cholesterol(in) = cholesterol(out). The catalysed reaction is a 1,2-diacyl-sn-glycero-3-phosphocholine(in) = a 1,2-diacyl-sn-glycero-3-phosphocholine(out). The enzyme catalyses a 1,2-diacyl-sn-glycero-3-phosphoethanolamine(in) = a 1,2-diacyl-sn-glycero-3-phosphoethanolamine(out). Phospholipid scramblase involved in lipid homeostasis and membrane dynamics processes. Has phospholipid scramblase activity toward cholesterol and phosphatidylserine, as well as phosphatidylethanolamine and phosphatidylcholine. Required for autophagosome formation: participates in early stages of autophagosome biogenesis at the endoplasmic reticulum (ER) membrane by reequilibrating the leaflets of the ER as lipids are extracted by ATG2 (ATG2A or ATG2B) to mediate autophagosome assembly. Regulates ATP2A2 activity to control ER-isolation membrane contacts for autophagosome formation. In addition to autophagy, involved in other processes in which phospholipid scramblase activity is required. Modulates ER contacts with lipid droplets, mitochondria and endosomes. Plays an essential role in formation of cell junctions. Upon stress such as bacterial and viral infection, promotes formation of cytoplasmic vacuoles followed by cell death. Involved in the cytoplasmic vacuolization of acinar cells during the early stage of acute pancreatitis. The chain is Vacuole membrane protein 1 from Bos taurus (Bovine).